The sequence spans 99 residues: DNA-directed RNA polymerase subunit omega (99 aa).

The tract at residues 55–99 (EAGTVISDPNPEEKRERLRIEREERKRQREQEQKELENRLRDEKN) is disordered. Residues 65–99 (PEEKRERLRIEREERKRQREQEQKELENRLRDEKN) show a composition bias toward basic and acidic residues.

It belongs to the RNA polymerase subunit omega family. In terms of assembly, the RNAP catalytic core consists of 2 alpha, 1 beta, 1 beta' and 1 omega subunit. When a sigma factor is associated with the core the holoenzyme is formed, which can initiate transcription.

The catalysed reaction is RNA(n) + a ribonucleoside 5'-triphosphate = RNA(n+1) + diphosphate. Functionally, promotes RNA polymerase assembly. Latches the N- and C-terminal regions of the beta' subunit thereby facilitating its interaction with the beta and alpha subunits. The protein is DNA-directed RNA polymerase subunit omega of Enterococcus faecalis (strain ATCC 700802 / V583).